We begin with the raw amino-acid sequence, 350 residues long: Eukaryotic translation initiation factor 3 subunit I (350 aa).

WD repeat units lie at residues 8-49, 51-89, 91-135, 149-188, 198-240, and 296-335; these read GHER…GTLE, HQGV…CVFT, ESPS…ESLT, QDGA…AVNS, EKNV…KVYK, and GHFG…FDFY.

This sequence belongs to the eIF-3 subunit I family. In terms of assembly, component of the eukaryotic translation initiation factor 3 (eIF-3) complex.

It is found in the cytoplasm. Its function is as follows. Component of the eukaryotic translation initiation factor 3 (eIF-3) complex, which is involved in protein synthesis of a specialized repertoire of mRNAs and, together with other initiation factors, stimulates binding of mRNA and methionyl-tRNAi to the 40S ribosome. The eIF-3 complex specifically targets and initiates translation of a subset of mRNAs involved in cell proliferation. In Scheffersomyces stipitis (strain ATCC 58785 / CBS 6054 / NBRC 10063 / NRRL Y-11545) (Yeast), this protein is Eukaryotic translation initiation factor 3 subunit I.